We begin with the raw amino-acid sequence, 930 residues long: Dual serine/threonine and tyrosine protein kinase (930 aa).

Residues 1–14 (MEGDGVPWGSEPVS) show a composition bias toward low complexity. The segment at 1–22 (MEGDGVPWGSEPVSGPGPGGGG) is disordered. Coiled coils occupy residues 190 to 216 (EEDL…MHHA) and 396 to 432 (RKKE…KEEL). The 255-residue stretch at 653–907 (PKLGQELGRG…PLLGIVQPML (255 aa)) folds into the Protein kinase domain. ATP is bound by residues 659 to 667 (LGRGQYGVV) and lysine 682. Catalysis depends on aspartate 778, which acts as the Proton acceptor.

It belongs to the protein kinase superfamily. Ser/Thr protein kinase family.

The protein localises to the cytoplasm. It localises to the cell membrane. The protein resides in the apical cell membrane. Its subcellular location is the basolateral cell membrane. It is found in the cell junction. The enzyme catalyses L-seryl-[protein] + ATP = O-phospho-L-seryl-[protein] + ADP + H(+). The catalysed reaction is L-threonyl-[protein] + ATP = O-phospho-L-threonyl-[protein] + ADP + H(+). It catalyses the reaction L-tyrosyl-[protein] + ATP = O-phospho-L-tyrosyl-[protein] + ADP + H(+). In terms of biological role, acts as a positive regulator of ERK phosphorylation downstream of fibroblast growth factor-receptor activation. Involved in the regulation of both caspase-dependent apoptosis and caspase-independent cell death. In the skin, it plays a predominant role in suppressing caspase-dependent apoptosis in response to UV stress in a range of dermal cell types. This Pan troglodytes (Chimpanzee) protein is Dual serine/threonine and tyrosine protein kinase (DSTYK).